A 398-amino-acid polypeptide reads, in one-letter code: 8-amino-7-oxononanoate synthase (398 aa).

Residue Arg-26 coordinates substrate. 113–114 (GF) contributes to the pyridoxal 5'-phosphate binding site. Residue His-138 coordinates substrate. Positions 181, 209, and 238 each coordinate pyridoxal 5'-phosphate. The residue at position 241 (Lys-241) is an N6-(pyridoxal phosphate)lysine. Thr-355 provides a ligand contact to substrate.

This sequence belongs to the class-II pyridoxal-phosphate-dependent aminotransferase family. BioF subfamily. In terms of assembly, homodimer. Pyridoxal 5'-phosphate serves as cofactor.

The catalysed reaction is 6-carboxyhexanoyl-[ACP] + L-alanine + H(+) = (8S)-8-amino-7-oxononanoate + holo-[ACP] + CO2. The protein operates within cofactor biosynthesis; biotin biosynthesis. In terms of biological role, catalyzes the decarboxylative condensation of pimeloyl-[acyl-carrier protein] and L-alanine to produce 8-amino-7-oxononanoate (AON), [acyl-carrier protein], and carbon dioxide. In Aeromonas salmonicida (strain A449), this protein is 8-amino-7-oxononanoate synthase.